The sequence spans 65 residues: Large ribosomal subunit protein bL35 (65 aa).

It belongs to the bacterial ribosomal protein bL35 family.

The protein is Large ribosomal subunit protein bL35 of Sodalis glossinidius (strain morsitans).